Reading from the N-terminus, the 804-residue chain is DNA gyrase subunit B (804 aa).

In terms of domain architecture, Toprim spans 431–546 (CEMYIVEGDS…NGCVYIAQPP (116 aa)). Residues Glu437, Asp511, and Asp513 each coordinate Mg(2+).

It belongs to the type II topoisomerase GyrB family. As to quaternary structure, heterotetramer, composed of two GyrA and two GyrB chains. In the heterotetramer, GyrA contains the active site tyrosine that forms a transient covalent intermediate with DNA, while GyrB binds cofactors and catalyzes ATP hydrolysis. Mg(2+) serves as cofactor. The cofactor is Mn(2+). It depends on Ca(2+) as a cofactor.

Its subcellular location is the cytoplasm. It catalyses the reaction ATP-dependent breakage, passage and rejoining of double-stranded DNA.. Functionally, a type II topoisomerase that negatively supercoils closed circular double-stranded (ds) DNA in an ATP-dependent manner to modulate DNA topology and maintain chromosomes in an underwound state. Negative supercoiling favors strand separation, and DNA replication, transcription, recombination and repair, all of which involve strand separation. Also able to catalyze the interconversion of other topological isomers of dsDNA rings, including catenanes and knotted rings. Type II topoisomerases break and join 2 DNA strands simultaneously in an ATP-dependent manner. The chain is DNA gyrase subunit B from Chlamydia muridarum (strain MoPn / Nigg).